Reading from the N-terminus, the 330-residue chain is DNA-directed RNA polymerase subunit alpha (330 aa).

The tract at residues 1–232 (MAILAFQKPD…YHFMLFSDEK (232 aa)) is alpha N-terminal domain (alpha-NTD). The segment at 248–330 (EEVLHMRQLL…DISKYKLDKE (83 aa)) is alpha C-terminal domain (alpha-CTD).

This sequence belongs to the RNA polymerase alpha chain family. In terms of assembly, homodimer. The RNAP catalytic core consists of 2 alpha, 1 beta, 1 beta' and 1 omega subunit. When a sigma factor is associated with the core the holoenzyme is formed, which can initiate transcription.

The enzyme catalyses RNA(n) + a ribonucleoside 5'-triphosphate = RNA(n+1) + diphosphate. DNA-dependent RNA polymerase catalyzes the transcription of DNA into RNA using the four ribonucleoside triphosphates as substrates. The protein is DNA-directed RNA polymerase subunit alpha of Bacteroides thetaiotaomicron (strain ATCC 29148 / DSM 2079 / JCM 5827 / CCUG 10774 / NCTC 10582 / VPI-5482 / E50).